The following is a 257-amino-acid chain: Imidazole glycerol phosphate synthase subunit HisF (257 aa).

Residues aspartate 11 and aspartate 130 contribute to the active site.

Belongs to the HisA/HisF family. As to quaternary structure, heterodimer of HisH and HisF.

The protein localises to the cytoplasm. It catalyses the reaction 5-[(5-phospho-1-deoxy-D-ribulos-1-ylimino)methylamino]-1-(5-phospho-beta-D-ribosyl)imidazole-4-carboxamide + L-glutamine = D-erythro-1-(imidazol-4-yl)glycerol 3-phosphate + 5-amino-1-(5-phospho-beta-D-ribosyl)imidazole-4-carboxamide + L-glutamate + H(+). The protein operates within amino-acid biosynthesis; L-histidine biosynthesis; L-histidine from 5-phospho-alpha-D-ribose 1-diphosphate: step 5/9. Its function is as follows. IGPS catalyzes the conversion of PRFAR and glutamine to IGP, AICAR and glutamate. The HisF subunit catalyzes the cyclization activity that produces IGP and AICAR from PRFAR using the ammonia provided by the HisH subunit. The chain is Imidazole glycerol phosphate synthase subunit HisF from Mannheimia succiniciproducens (strain KCTC 0769BP / MBEL55E).